A 424-amino-acid chain; its full sequence is Sulfate adenylyltransferase (424 aa).

It belongs to the sulfate adenylyltransferase family.

It carries out the reaction sulfate + ATP + H(+) = adenosine 5'-phosphosulfate + diphosphate. It functions in the pathway sulfur metabolism; hydrogen sulfide biosynthesis; sulfite from sulfate: step 1/3. This is Sulfate adenylyltransferase from Desulfatibacillum aliphaticivorans.